The following is a 77-amino-acid chain: U10-lycotoxin-Ls1d (77 aa).

A signal peptide spans 1-20; that stretch reads MKLIIFTGLFLFAIVSLIEA. A propeptide spanning residues 21-26 is cleaved from the precursor; sequence EEESGR.

Belongs to the neurotoxin 19 (CSTX) family. 09 (U10-Lctx) subfamily. In terms of processing, contains 4 disulfide bonds. Expressed by the venom gland.

It localises to the secreted. In Lycosa singoriensis (Wolf spider), this protein is U10-lycotoxin-Ls1d.